The primary structure comprises 344 residues: Transcription factor HRS1 (344 aa).

Residues 88–184 (IKDSSTSNEE…DGGGGRKQRR (97 aa)) form a disordered region. A compositionally biased stretch (acidic residues) spans 95 to 104 (NEEEDEEFDD). 2 stretches are compositionally biased toward basic and acidic residues: residues 105–124 (EHGN…KSDW) and 138–178 (LLPK…DGGG). Residues 178–238 (GGRKQRRCWS…HLQKYRLHTR (61 aa)) form the HTH myb-type domain. Residues 209–234 (PKQIREFMKVDGLTNDEVKSHLQKYR) constitute a DNA-binding region (H-T-H motif). The span at 269-291 (STGKTTGGATTSSTTTTTGIYGT) shows a compositional bias: low complexity. Positions 269–322 (STGKTTGGATTSSTTTTTGIYGTMAAPPPPQWPSHSNYRPSIIVDEGSGSHSEG) are disordered.

Expressed in the root hair region and root hair cells.

It is found in the nucleus. In terms of biological role, transcription factor involved in nitrate and phosphate signaling in roots. Integrates nitrate and phosphate starvation responses and adaptation of root architecture depending on nutrient availabilities. Acts downstream of the nitrate sensor and transporter NPF6.3/NRT1.1. Represses primary root development in response to phosphate deficiency conditions, only when nitrate is present. Involved in the modulation of primary root and root hair growth in phosphate-deprived environment. May be required for suppressing abscisic acid (ABA) signaling in germinating embryo axis, which promotes the timely germination of seeds. The sequence is that of Transcription factor HRS1 from Arabidopsis thaliana (Mouse-ear cress).